Consider the following 568-residue polypeptide: Sulfite reductase [NADPH] hemoprotein beta-component (568 aa).

[4Fe-4S] cluster-binding residues include cysteine 425, cysteine 431, cysteine 470, and cysteine 474. Position 474 (cysteine 474) interacts with siroheme.

This sequence belongs to the nitrite and sulfite reductase 4Fe-4S domain family. As to quaternary structure, alpha(8)-beta(8). The alpha component is a flavoprotein, the beta component is a hemoprotein. It depends on siroheme as a cofactor. Requires [4Fe-4S] cluster as cofactor.

It catalyses the reaction hydrogen sulfide + 3 NADP(+) + 3 H2O = sulfite + 3 NADPH + 4 H(+). The protein operates within sulfur metabolism; hydrogen sulfide biosynthesis; hydrogen sulfide from sulfite (NADPH route): step 1/1. Functionally, component of the sulfite reductase complex that catalyzes the 6-electron reduction of sulfite to sulfide. This is one of several activities required for the biosynthesis of L-cysteine from sulfate. The chain is Sulfite reductase [NADPH] hemoprotein beta-component from Xanthomonas euvesicatoria pv. vesicatoria (strain 85-10) (Xanthomonas campestris pv. vesicatoria).